Reading from the N-terminus, the 173-residue chain is NADH-ubiquinone oxidoreductase chain 6 (173 aa).

Helical transmembrane passes span 1–21 (MTYFVVFLGLCFVLGGLAVAS), 27–47 (YGVVGLVLASVAGCGWLLSLG), 48–68 (VSFVSLVLFMVYLGGMLVVFV), 87–107 (VVGYGMSFIVVLVVGVVVGGF), 113–133 (FGVVTVDSAGVFFARLDFSGV), and 139–159 (CGVGMFLVAGWGLLLTLFVVL).

It belongs to the complex I subunit 6 family.

It is found in the mitochondrion membrane. It carries out the reaction a ubiquinone + NADH + 5 H(+)(in) = a ubiquinol + NAD(+) + 4 H(+)(out). In terms of biological role, core subunit of the mitochondrial membrane respiratory chain NADH dehydrogenase (Complex I) that is believed to belong to the minimal assembly required for catalysis. Complex I functions in the transfer of electrons from NADH to the respiratory chain. The immediate electron acceptor for the enzyme is believed to be ubiquinone. This is NADH-ubiquinone oxidoreductase chain 6 (MT-ND6) from Cepphus grylle (Black guillemot).